The sequence spans 155 residues: Putative ATP synthase protein YMF19-like protein (155 aa).

3 helical membrane-spanning segments follow: residues 23-43, 89-109, and 117-137; these read FLWL…VLVF, WRAL…LGSF, and VDFG…LFFF.

The protein belongs to the ATPase protein YMF19 family.

The protein resides in the mitochondrion membrane. This chain is Putative ATP synthase protein YMF19-like protein (YMF18), found in Marchantia polymorpha (Common liverwort).